Here is a 426-residue protein sequence, read N- to C-terminus: Phosphomethylpyrimidine synthase (426 aa).

Substrate is bound by residues Asn-65, Met-94, Tyr-123, His-162, 184–186 (SRG), 225–228 (DGMR), and Glu-264. His-268 provides a ligand contact to Zn(2+). A substrate-binding site is contributed by Tyr-291. His-332 provides a ligand contact to Zn(2+). [4Fe-4S] cluster contacts are provided by Cys-408, Cys-411, and Cys-415.

This sequence belongs to the ThiC family. Requires [4Fe-4S] cluster as cofactor.

It catalyses the reaction 5-amino-1-(5-phospho-beta-D-ribosyl)imidazole + S-adenosyl-L-methionine = 4-amino-2-methyl-5-(phosphooxymethyl)pyrimidine + CO + 5'-deoxyadenosine + formate + L-methionine + 3 H(+). It functions in the pathway cofactor biosynthesis; thiamine diphosphate biosynthesis. Its function is as follows. Catalyzes the synthesis of the hydroxymethylpyrimidine phosphate (HMP-P) moiety of thiamine from aminoimidazole ribotide (AIR) in a radical S-adenosyl-L-methionine (SAM)-dependent reaction. The protein is Phosphomethylpyrimidine synthase of Methanocaldococcus jannaschii (strain ATCC 43067 / DSM 2661 / JAL-1 / JCM 10045 / NBRC 100440) (Methanococcus jannaschii).